Here is a 501-residue protein sequence, read N- to C-terminus: Aromatase 3 (501 aa).

Heme is bound at residue Cys435.

The protein belongs to the cytochrome P450 family. The cofactor is heme. In terms of tissue distribution, ovary.

It is found in the membrane. The enzyme catalyses testosterone + 3 reduced [NADPH--hemoprotein reductase] + 3 O2 = 17beta-estradiol + formate + 3 oxidized [NADPH--hemoprotein reductase] + 4 H2O + 4 H(+). It catalyses the reaction androst-4-ene-3,17-dione + 3 reduced [NADPH--hemoprotein reductase] + 3 O2 = estrone + formate + 3 oxidized [NADPH--hemoprotein reductase] + 4 H2O + 4 H(+). Its function is as follows. Catalyzes the formation of aromatic C18 estrogens from C19 androgens. This is Aromatase 3 (CYP19A3) from Sus scrofa (Pig).